A 524-amino-acid polypeptide reads, in one-letter code: Translation initiation factor eIF2B subunit delta (524 aa).

The interval 1 to 173 (MATAAVAVRE…ERQQVPTRKD (173 aa)) is disordered. Ala2 carries the post-translational modification N-acetylalanine. Residue Ser12 is modified to Phosphoserine. Over residues 26–40 (AEGREMTQEEKLQLR) the composition is skewed to basic and acidic residues. The span at 41–51 (KEKKQQKKKRK) shows a compositional bias: basic residues. Thr86 is modified (phosphothreonine). 2 stretches are compositionally biased toward basic and acidic residues: residues 87-121 (AKEKVPAGRSKAELRAERRAKQEAERAMKQARKGD) and 161-173 (KKPERQQVPTRKD). Positions 171–180 (RKDYGSKVSL) are may bind the chemical integrated stress response (ISR) inhibitor ISRIB.

This sequence belongs to the eIF-2B alpha/beta/delta subunits family. In terms of assembly, component of the translation initiation factor 2B (eIF2B) complex which is a heterodecamer of two sets of five different subunits: alpha, beta, gamma, delta and epsilon. Subunits alpha, beta and delta comprise a regulatory subcomplex and subunits epsilon and gamma comprise a catalytic subcomplex. Within the complex, the hexameric regulatory complex resides at the center, with the two heterodimeric catalytic subcomplexes bound on opposite sides.

The protein resides in the cytoplasm. The protein localises to the cytosol. Activated by the chemical integrated stress response (ISR) inhibitor ISRIB which stimulates guanine nucleotide exchange factor activity for both phosphorylated and unphosphorylated eIF2. Its function is as follows. Acts as a component of the translation initiation factor 2B (eIF2B) complex, which catalyzes the exchange of GDP for GTP on eukaryotic initiation factor 2 (eIF2) gamma subunit. Its guanine nucleotide exchange factor activity is repressed when bound to eIF2 complex phosphorylated on the alpha subunit, thereby limiting the amount of methionyl-initiator methionine tRNA available to the ribosome and consequently global translation is repressed. The sequence is that of Translation initiation factor eIF2B subunit delta (EIF2B4) from Bos taurus (Bovine).